We begin with the raw amino-acid sequence, 152 residues long: Deoxyuridine 5'-triphosphate nucleotidohydrolase (152 aa).

Residues 71–73 (RSG), Asn-84, 88–90 (LID), and Met-98 contribute to the substrate site.

Belongs to the dUTPase family. Mg(2+) is required as a cofactor.

The catalysed reaction is dUTP + H2O = dUMP + diphosphate + H(+). It participates in pyrimidine metabolism; dUMP biosynthesis; dUMP from dCTP (dUTP route): step 2/2. Its function is as follows. This enzyme is involved in nucleotide metabolism: it produces dUMP, the immediate precursor of thymidine nucleotides and it decreases the intracellular concentration of dUTP so that uracil cannot be incorporated into DNA. This Shewanella woodyi (strain ATCC 51908 / MS32) protein is Deoxyuridine 5'-triphosphate nucleotidohydrolase.